We begin with the raw amino-acid sequence, 901 residues long: PGC-1 and ERR-induced regulator in muscle protein 1 (901 aa).

3 disordered regions span residues 29-511 (QAGL…MPAS), 564-671 (SLEG…MGPG), and 731-752 (RHQE…APPP). Positions 100–112 (GQQTPSTSAQSEA) are enriched in polar residues. The segment covering 157 to 178 (GEPAGSPESPVHSAAPQRSPGS) has biased composition (low complexity). 5 stretches are compositionally biased toward polar residues: residues 267–276 (LSTSVSTTEQ), 347–379 (DESQ…QSTP), 387–418 (EPQS…QSTP), 426–457 (EPQS…QSTP), and 465–484 (EPQS…STPT). The span at 608 to 624 (PSSEEPGSGEVSGPLSP) shows a compositional bias: low complexity.

The protein localises to the cytoplasm. It is found in the nucleus. Functionally, regulates the expression of selective PPARGC1A/B and ESRRA/B/G target genes with roles in glucose and lipid metabolism, energy transfer, contractile function, muscle mitochondrial biogenesis and oxidative capacity. Required for the efficient induction of MT-CO2, MT-CO3, COX4I1, TFB1M, TFB2M, POLRMT and SIRT3 by PPARGC1A. Positively regulates the PPARGC1A/ESRRG-induced expression of CKMT2, TNNI3 and SLC2A4 and negatively regulates the PPARGC1A/ESRRG-induced expression of PDK4. The sequence is that of PGC-1 and ERR-induced regulator in muscle protein 1 (PERM1) from Bos taurus (Bovine).